Reading from the N-terminus, the 616-residue chain is Zinc metalloproteinase-disintegrin-like protein H3 (616 aa).

The first 20 residues, 1 to 20, serve as a signal peptide directing secretion; that stretch reads MIQVLLVIICLAVFPYQGSS. Positions 21 to 193 are excised as a propeptide; the sequence is IILESGNVND…KKASQLNLTP (173 aa). Glutamate 194 is subject to Pyrrolidone carboxylic acid (Glu). Positions 203-399 constitute a Peptidase M12B domain; sequence KYIKLVIVAD…KMPQCILNKP (197 aa). 3 disulfides stabilise this stretch: cysteine 314/cysteine 394, cysteine 354/cysteine 378, and cysteine 356/cysteine 361. Position 339 (histidine 339) interacts with Zn(2+). A Metal-binding motif is present at residues 339-350; that stretch reads HEMGHNLGMDHD. Glutamate 340 acts as the Proton acceptor in catalysis. Zn(2+) is bound by residues histidine 343 and histidine 349. N-linked (GlcNAc...) asparagine glycosylation occurs at asparagine 377. A Disintegrin domain is found at 407–493; sequence PAVCGNYLVE…ECPTDQFQRN (87 aa). Residues valine 409, asparagine 412, glutamate 416, glutamate 419, and aspartate 422 each contribute to the Ca(2+) site. 14 cysteine pairs are disulfide-bonded: cysteine 410/cysteine 439, cysteine 421/cysteine 434, cysteine 423/cysteine 429, cysteine 433/cysteine 456, cysteine 447/cysteine 453, cysteine 452/cysteine 478, cysteine 465/cysteine 485, cysteine 472/cysteine 504, cysteine 497/cysteine 509, cysteine 516/cysteine 566, cysteine 531/cysteine 577, cysteine 544/cysteine 554, cysteine 561/cysteine 603, and cysteine 597/cysteine 609. Residues 471–473 carry the D/ECD-tripeptide motif; the sequence is ECD. 3 residues coordinate Ca(2+): aspartate 473, aspartate 476, and aspartate 488. N-linked (GlcNAc...) asparagine glycosylation occurs at asparagine 506.

It belongs to the venom metalloproteinase (M12B) family. P-III subfamily. P-IIIc sub-subfamily. As to quaternary structure, homodimer; disulfide-linked. Zn(2+) is required as a cofactor. In terms of processing, N-glycosylated. The N-terminus is blocked. Expressed by the venom gland (at protein level). Expressed by the venom gland.

The protein localises to the secreted. The proteolytic activity requires Zn(2+) and Ca(2+) ions. The alpha-fibrinogenase activity is completely inhibited by EDTA, but not by PMSF. Functionally, zinc metalloprotease that has fibrinogenolytic and hemorrhagic activities. Cleaves insulin B chain readily at '38-Ala-|-Leu-39' bond, and at a significantly slower rate, at '40-Tyr-|-Leu-41' bond. Hydrolyzes isolated extracellular matrix (ECM) bovine fibronectin, and basal membrane (BM) proteins human collagen IV and, to a lesser extent, murine laminin, in vitro. Cleaves murine nidogen (at '350-Ser-|-Phe-351' and '380-Tyr-|-Asn-381' bonds), but not laminin, in a solubilized BM preparation. Hydrolyzes plasma proteins involved in blood coagulation in vitro. It significantly prolongs thrombin time. Has potent alpha-fibrinogenase activity cleaving human fibrinogen alpha chain at '432-Lys-|-Leu-433' bond, but does not cleave beta or gamma chains. Hydrolyzes bovine prothrombin, but does not cleave it at '366-Arg-|-Ile-367' bond, which is necessary for the formation of active alpha-thrombin, however, the cleavage of fragment 1 from it leads to reduced alpha-thrombin formation. Hydrolyzes bovine factor X heavy chain at '211-Ser-|-Leu-212', '213-Asp-|-Leu-214' and '216-Gly-|-Leu-217' bonds activating it only marginally as does not cleave at the physiological activation site. Does not cleave factor X light chain. No hydrolysis or activation of plasminogen. The alpha-fibrinogenase activity likely contributes to its hemorrhagic activity, which in rat can be completely neutralized in vivo by anti-ammodytagin antibodies, which strongly cross-react with this protein. Has very weak collagen-, ADP- and ristocetin-induced platelet aggregation inhibition activity in vitro. The chain is Zinc metalloproteinase-disintegrin-like protein H3 from Vipera ammodytes ammodytes (Western sand viper).